A 377-amino-acid chain; its full sequence is Copper-containing nitrite reductase (377 aa).

A signal peptide (tat-type signal) is located at residues 1 to 35 (MTNTLQMTRRTMLTGAAVAGALTPILTSGGGNASP). Plastocyanin-like domains lie at 99–194 (MTFD…IMVL) and 259–360 (GAVG…FKVT). H132, H137, H172, C173, H182, M187, and H343 together coordinate Cu cation.

Belongs to the multicopper oxidase family. Homotrimer. Cu(2+) serves as cofactor. Cu(+) is required as a cofactor. It depends on FAD as a cofactor. In terms of processing, predicted to be exported by the Tat system. The position of the signal peptide cleavage has not been experimentally proven.

The protein resides in the periplasm. It carries out the reaction nitric oxide + Fe(III)-[cytochrome c] + H2O = Fe(II)-[cytochrome c] + nitrite + 2 H(+). The protein operates within nitrogen metabolism; nitrate reduction (denitrification); dinitrogen from nitrate: step 2/4. The sequence is that of Copper-containing nitrite reductase (nirK) from Rhizobium sullae (Rhizobium hedysari).